The sequence spans 137 residues: Cell division protein SepF (137 aa).

The protein belongs to the SepF family. As to quaternary structure, homodimer. Interacts with FtsZ.

The protein resides in the cytoplasm. In terms of biological role, cell division protein that is part of the divisome complex and is recruited early to the Z-ring. Probably stimulates Z-ring formation, perhaps through the cross-linking of FtsZ protofilaments. Its function overlaps with FtsA. The polypeptide is Cell division protein SepF (Thermoanaerobacter pseudethanolicus (strain ATCC 33223 / 39E) (Clostridium thermohydrosulfuricum)).